We begin with the raw amino-acid sequence, 273 residues long: Peptidoglycan-N-acetylglucosamine deacetylase BC_1974 (273 aa).

A helical membrane pass occupies residues 10-30; that stretch reads IVVVLIAIAAVAIGYYMFQSI. Positions 69 to 255 constitute a NodB homology domain; the sequence is KVAYLTFDDG…GLKEKGYEFE (187 aa). Asp76 (proton acceptor) is an active-site residue. Zn(2+) is bound by residues Asp77, His126, and His130. The active-site Proton donor is the His230.

This sequence belongs to the polysaccharide deacetylase family. It depends on Zn(2+) as a cofactor. The cofactor is Co(2+). Ni(2+) serves as cofactor.

It is found in the cell membrane. It carries out the reaction peptidoglycan-N-acetyl-D-glucosamine + H2O = peptidoglycan-D-glucosamine + acetate.. Its activity is regulated as follows. Inhibited by the hydroxamate N-hydroxy-4-(naphthalene-1-yl)benzamide (NHNB). Its function is as follows. Catalyzes the deacetylation of N-acetylglucosamine (GlcNAc) residues in peptidoglycan. The sequence is that of Peptidoglycan-N-acetylglucosamine deacetylase BC_1974 from Bacillus cereus (strain ATCC 14579 / DSM 31 / CCUG 7414 / JCM 2152 / NBRC 15305 / NCIMB 9373 / NCTC 2599 / NRRL B-3711).